The chain runs to 194 residues: Dephospho-CoA kinase (194 aa).

The 191-residue stretch at 4–194 folds into the DPCK domain; that stretch reads VIGLTGSIGM…VKEILQKLGA (191 aa). 12–17 contacts ATP; it reads GMGKTT.

This sequence belongs to the CoaE family.

The protein resides in the cytoplasm. It carries out the reaction 3'-dephospho-CoA + ATP = ADP + CoA + H(+). It functions in the pathway cofactor biosynthesis; coenzyme A biosynthesis; CoA from (R)-pantothenate: step 5/5. In terms of biological role, catalyzes the phosphorylation of the 3'-hydroxyl group of dephosphocoenzyme A to form coenzyme A. This chain is Dephospho-CoA kinase, found in Agrobacterium fabrum (strain C58 / ATCC 33970) (Agrobacterium tumefaciens (strain C58)).